Here is a 355-residue protein sequence, read N- to C-terminus: S-methyl-5'-thioadenosine phosphorylase (355 aa).

Phosphate is bound by residues Thr45, 91–92 (RH), and 124–125 (SA). Position 226 (Met226) interacts with substrate. Ser227 contacts phosphate. Substrate is bound at residue 250 to 252 (DYD).

It belongs to the PNP/MTAP phosphorylase family. MTAP subfamily. Homotrimer.

Its subcellular location is the cytoplasm. The protein localises to the nucleus. It carries out the reaction S-methyl-5'-thioadenosine + phosphate = 5-(methylsulfanyl)-alpha-D-ribose 1-phosphate + adenine. It functions in the pathway amino-acid biosynthesis; L-methionine biosynthesis via salvage pathway; S-methyl-5-thio-alpha-D-ribose 1-phosphate from S-methyl-5'-thioadenosine (phosphorylase route): step 1/1. In terms of biological role, catalyzes the reversible phosphorylation of S-methyl-5'-thioadenosine (MTA) to adenine and 5-methylthioribose-1-phosphate. Involved in the breakdown of MTA, a major by-product of polyamine biosynthesis. Responsible for the first step in the methionine salvage pathway after MTA has been generated from S-adenosylmethionine. Has broad substrate specificity with 6-aminopurine nucleosides as preferred substrates. In Emericella nidulans (strain FGSC A4 / ATCC 38163 / CBS 112.46 / NRRL 194 / M139) (Aspergillus nidulans), this protein is S-methyl-5'-thioadenosine phosphorylase.